Here is a 488-residue protein sequence, read N- to C-terminus: 3-octaprenyl-4-hydroxybenzoate carboxy-lyase (488 aa).

A Mn(2+)-binding site is contributed by asparagine 172. Prenylated FMN-binding positions include 175 to 177 (IYR), 189 to 191 (RWL), and 194 to 195 (RG). Glutamate 238 serves as a coordination point for Mn(2+). Residue aspartate 287 is the Proton donor of the active site.

This sequence belongs to the UbiD family. In terms of assembly, homohexamer. It depends on prenylated FMN as a cofactor. Mn(2+) is required as a cofactor.

The protein resides in the cell membrane. The enzyme catalyses a 4-hydroxy-3-(all-trans-polyprenyl)benzoate + H(+) = a 2-(all-trans-polyprenyl)phenol + CO2. The protein operates within cofactor biosynthesis; ubiquinone biosynthesis. Catalyzes the decarboxylation of 3-octaprenyl-4-hydroxy benzoate to 2-octaprenylphenol, an intermediate step in ubiquinone biosynthesis. This Pseudomonas fluorescens (strain Pf0-1) protein is 3-octaprenyl-4-hydroxybenzoate carboxy-lyase.